The chain runs to 294 residues: MNNIFKGLITAAITPFKDNKLDLYALERILKHQIKYEVDAILIAGSTGEGSSLSFEEYKLLLQTSVEIVNNRIPIISGCSSNNTAYARELAAESTKIKVDGFMASPPSYVKPTQYGIYKHFEALHEACNLPIMLYSAPTRSGVDFSDETILRLSKLPRILALKDCGVDLERPLRIRAVVKKDFNILTGNDEVVLAFNAQGGVGWTSVASNIAPDMCKELLEKWNKNDTKGALEIHQKLLPLYKALFVESNPIPIKYAAYYLGLCENEIRLPLTEASDSAKKQIENIITSLSIKL.

Thr-47 is a binding site for pyruvate. The active-site Proton donor/acceptor is Tyr-135. Lys-163 (schiff-base intermediate with substrate) is an active-site residue. Thr-205 is a binding site for pyruvate.

It belongs to the DapA family. Homotetramer; dimer of dimers.

It is found in the cytoplasm. It catalyses the reaction L-aspartate 4-semialdehyde + pyruvate = (2S,4S)-4-hydroxy-2,3,4,5-tetrahydrodipicolinate + H2O + H(+). It participates in amino-acid biosynthesis; L-lysine biosynthesis via DAP pathway; (S)-tetrahydrodipicolinate from L-aspartate: step 3/4. In terms of biological role, catalyzes the condensation of (S)-aspartate-beta-semialdehyde [(S)-ASA] and pyruvate to 4-hydroxy-tetrahydrodipicolinate (HTPA). The polypeptide is 4-hydroxy-tetrahydrodipicolinate synthase (Rickettsia felis (strain ATCC VR-1525 / URRWXCal2) (Rickettsia azadi)).